A 213-amino-acid polypeptide reads, in one-letter code: NADH dehydrogenase [ubiquinone] iron-sulfur protein 7, mitochondrial (213 aa).

The N-terminal 31 residues, 1–31, are a transit peptide targeting the mitochondrion; it reads MALIARNAKLLTGTAPFLQRAATIHTTLPSL. Residues 30–42 show a composition bias toward low complexity; it reads SLSQQPASSPATS. A disordered region spans residues 30–52; it reads SLSQQPASSPATSGGAQPPSMNT. Positions 88, 89, 153, and 183 each coordinate [4Fe-4S] cluster.

Belongs to the complex I 20 kDa subunit family. Complex I is composed of about 45 different subunits. This is a component of the iron-sulfur (IP) fragment of the enzyme. Requires [4Fe-4S] cluster as cofactor.

It is found in the mitochondrion. It carries out the reaction a ubiquinone + NADH + 5 H(+)(in) = a ubiquinol + NAD(+) + 4 H(+)(out). Functionally, core subunit of the mitochondrial membrane respiratory chain NADH dehydrogenase (Complex I) that is believed to belong to the minimal assembly required for catalysis. Complex I functions in the transfer of electrons from NADH to the respiratory chain. The immediate electron acceptor for the enzyme is believed to be ubiquinone. The sequence is that of NADH dehydrogenase [ubiquinone] iron-sulfur protein 7, mitochondrial from Solanum tuberosum (Potato).